The sequence spans 362 residues: Atypical chemokine receptor 3 (362 aa).

Residues 1 to 40 (MDLHLFDYAEPGNFSDISWPCNSSDCIVVDTVLCPNMPNK) are Extracellular-facing. N13, N22, and N39 each carry an N-linked (GlcNAc...) asparagine glycan. A helical membrane pass occupies residues 41-61 (SVLLYTLSFIYIFIFVIGMIA). Residues 62–81 (NSVVVWVNIQAKTTGYDTHC) lie on the Cytoplasmic side of the membrane. A helical transmembrane segment spans residues 82–102 (YILNLAIADLWVVVTIPVWVV). Topologically, residues 103–118 (SLVQHNQWPMGELTCK) are extracellular. C117 and C196 are oxidised to a cystine. Residues 119–139 (ITHLIFSINLFGSIFFLTCMS) form a helical membrane-spanning segment. The Cytoplasmic segment spans residues 140 to 162 (VDRYLSITYFASTSSRRKKVVRR). The helical transmembrane segment at 163 to 183 (AVCVLVWLLAFCVSLPDTYYL) threads the bilayer. Over 184–213 (KTVTSASNNETYCRSFYPEHSVKEWLISME) the chain is Extracellular. Residues 214–234 (LVSVVLGFAIPFCVIAVFYCL) traverse the membrane as a helical segment. Over 235–252 (LARAISASSDQEKQSSRK) the chain is Cytoplasmic. A helical membrane pass occupies residues 253-273 (IIFSYVVVFLVCWLPYHVVVL). Residues 274 to 296 (LDIFSILHYIPFTCQLENFLFTA) lie on the Extracellular side of the membrane. A helical transmembrane segment spans residues 297 to 319 (LHVTQCLSLVHCCVNPVLYSFIN). Residues 320–362 (RNYRYELMKAFIFKYSAKTGLTKLIDASRVSETEYSALEQNAK) are Cytoplasmic-facing. The C-terminal cytoplasmic tail stretch occupies residues 324 to 362 (YELMKAFIFKYSAKTGLTKLIDASRVSETEYSALEQNAK). 3 positions are modified to phosphoserine: S347, S350, and S355.

The protein belongs to the G-protein coupled receptor 1 family. Atypical chemokine receptor subfamily. As to quaternary structure, homodimer. Can form heterodimers with CXCR4; heterodimerization may regulate CXCR4 signaling activity. Interacts with ARRB1 and ARRB2. Post-translationally, the Ser/Thr residues in the C-terminal cytoplasmic tail may be phosphorylated. Ubiquitinated at the Lys residues in its C-terminal cytoplasmic tail and is essential for correct trafficking from and to the cell membrane. Deubiquitinated by CXCL12-stimulation in a reversible manner.

Its subcellular location is the cell membrane. It localises to the early endosome. The protein resides in the recycling endosome. Its function is as follows. Atypical chemokine receptor that controls chemokine levels and localization via high-affinity chemokine binding that is uncoupled from classic ligand-driven signal transduction cascades, resulting instead in chemokine sequestration, degradation, or transcytosis. Also known as interceptor (internalizing receptor) or chemokine-scavenging receptor or chemokine decoy receptor. Acts as a receptor for chemokines CXCL11 and CXCL12/SDF1. Chemokine binding does not activate G-protein-mediated signal transduction but instead induces beta-arrestin recruitment, leading to ligand internalization and activation of MAPK signaling pathway. Required for regulation of CXCR4 protein levels in migrating interneurons, thereby adapting their chemokine responsiveness. In glioma cells, transduces signals via MEK/ERK pathway, mediating resistance to apoptosis. Promotes cell growth and survival. Not involved in cell migration, adhesion or proliferation of normal hematopoietic progenitors but activated by CXCL11 in malignant hemapoietic cells, leading to phosphorylation of ERK1/2 (MAPK3/MAPK1) and enhanced cell adhesion and migration. Plays a regulatory role in CXCR4-mediated activation of cell surface integrins by CXCL12. Required for heart valve development. Regulates axon guidance in the oculomotor system through the regulation of CXCL12 levels. The polypeptide is Atypical chemokine receptor 3 (ACKR3) (Canis lupus familiaris (Dog)).